The primary structure comprises 1529 residues: Ras guanine nucleotide exchange factor B (1529 aa).

Positions 135 to 186 form a coiled coil; that stretch reads ISNIEKQLSNLVNLKSNTTEQTDRKYKTNLIDFKESIIQLEKDCKNLLKQSN. 5 disordered regions span residues 290–357, 576–600, 680–724, 847–948, and 1168–1206; these read INTL…ISIN, TTTTTTTTTTTNTTTNPSNTIKSSH, KRNT…HIQQ, MGKE…NHNR, and QPPQITTQSTQPIQNSTTQPQPQPQPQQPQPQLQQSTNL. Low complexity-rich tracts occupy residues 576–591, 683–724, and 853–887; these read TTTTTTTTTTTNTTTN, TSSG…HIQQ, and NSNTNNANNPNNNNNNNNNNNNNNNNNNNNNNNNE. 2 coiled-coil regions span residues 722–798 and 871–898; these read IQQI…LNRK and NNNNNNNNNNNNNNNNENKNENKNETNK. Basic and acidic residues predominate over residues 888–898; sequence NKNENKNETNK. 4 stretches are compositionally biased toward low complexity: residues 906–916, 924–940, 1168–1187, and 1197–1206; these read SSTSTLSSSTT, SSTNSPNSSTPNLLLPP, QPPQITTQSTQPIQNSTTQP, and QPQLQQSTNL. The 131-residue stretch at 1075–1205 folds into the N-terminal Ras-GEF domain; sequence FYRSIKYASL…PQPQLQQSTN (131 aa). The 236-residue stretch at 1282–1517 folds into the Ras-GEF domain; it reads SSTDIAEQLT…YEQSILLEPK (236 aa).

The protein resides in the cytoplasm. Promotes the exchange of Ras-bound GDP by GTP. Involved in phagocytosis, fluid-phase endocytosis, regulation of macropinocytosis and control of cell movement. The protein is Ras guanine nucleotide exchange factor B (gefB) of Dictyostelium discoideum (Social amoeba).